The sequence spans 483 residues: Protein nucleotidyltransferase YdiU (483 aa).

Positions 87, 89, 90, 110, 122, 123, 173, and 180 each coordinate ATP. D249 (proton acceptor) is an active-site residue. 2 residues coordinate Mg(2+): N250 and D259. D259 contributes to the ATP binding site.

Belongs to the SELO family. Mg(2+) serves as cofactor. Requires Mn(2+) as cofactor.

The catalysed reaction is L-seryl-[protein] + ATP = 3-O-(5'-adenylyl)-L-seryl-[protein] + diphosphate. It catalyses the reaction L-threonyl-[protein] + ATP = 3-O-(5'-adenylyl)-L-threonyl-[protein] + diphosphate. The enzyme catalyses L-tyrosyl-[protein] + ATP = O-(5'-adenylyl)-L-tyrosyl-[protein] + diphosphate. It carries out the reaction L-histidyl-[protein] + UTP = N(tele)-(5'-uridylyl)-L-histidyl-[protein] + diphosphate. The catalysed reaction is L-seryl-[protein] + UTP = O-(5'-uridylyl)-L-seryl-[protein] + diphosphate. It catalyses the reaction L-tyrosyl-[protein] + UTP = O-(5'-uridylyl)-L-tyrosyl-[protein] + diphosphate. In terms of biological role, nucleotidyltransferase involved in the post-translational modification of proteins. It can catalyze the addition of adenosine monophosphate (AMP) or uridine monophosphate (UMP) to a protein, resulting in modifications known as AMPylation and UMPylation. This chain is Protein nucleotidyltransferase YdiU, found in Pectobacterium carotovorum subsp. carotovorum (strain PC1).